The chain runs to 346 residues: Phosphoribosylformylglycinamidine cyclo-ligase (346 aa).

This sequence belongs to the AIR synthase family.

The protein localises to the cytoplasm. It catalyses the reaction 2-formamido-N(1)-(5-O-phospho-beta-D-ribosyl)acetamidine + ATP = 5-amino-1-(5-phospho-beta-D-ribosyl)imidazole + ADP + phosphate + H(+). The protein operates within purine metabolism; IMP biosynthesis via de novo pathway; 5-amino-1-(5-phospho-D-ribosyl)imidazole from N(2)-formyl-N(1)-(5-phospho-D-ribosyl)glycinamide: step 2/2. This chain is Phosphoribosylformylglycinamidine cyclo-ligase, found in Methylobacillus flagellatus (strain ATCC 51484 / DSM 6875 / VKM B-1610 / KT).